Here is a 603-residue protein sequence, read N- to C-terminus: Zinc finger protein 415 (603 aa).

The C2H2-type 1; degenerate zinc finger occupies 264 to 286 (YRYIECDKALNHGSHMTVRQVSH). 11 consecutive C2H2-type zinc fingers follow at residues 292 to 314 (YKCD…WRVH), 320 to 342 (YKCN…RRVH), 348 to 370 (YKCY…QKTH), 376 to 398 (YTCK…QVIH), 404 to 426 (YKCN…QRIH), 432 to 454 (YKCN…WRIH), 460 to 482 (YKCN…RRVH), 488 to 510 (YKCN…QVIH), 516 to 538 (YKCN…QVIH), 544 to 566 (YKCN…QIIH), and 572 to 594 (YKCS…QIIH).

Expressed in all tissues examined. Isoforms are differentially expressed. Isoform 3 and isoform 5 were highly expressed, isoform 4 moderately expressed, isoform 2 lower expression, the lowest expression level was seem with isoform 1.

The protein resides in the nucleus. It localises to the cytoplasm. In terms of biological role, involved in transcriptional regulation. Transcriptional activity differed among the various isoforms. All isoforms except isoform 3 seem to suppresses the transcriptional activities of AP-1 and p53/TP53. This is Zinc finger protein 415 (ZNF415) from Homo sapiens (Human).